The sequence spans 349 residues: Outer membrane protein assembly factor BamC (349 aa).

The N-terminal stretch at 1-24 is a signal peptide; the sequence is MAILLQKSKVMKIAGMSLAMLLAA. A lipid anchor (N-palmitoyl cysteine) is attached at Cys-25. Cys-25 carries S-diacylglycerol cysteine lipidation.

This sequence belongs to the BamC family. As to quaternary structure, part of the Bam complex, which is composed of the outer membrane protein BamA, and four lipoproteins BamB, BamC, BamD and BamE.

The protein localises to the cell outer membrane. Its function is as follows. Part of the outer membrane protein assembly complex, which is involved in assembly and insertion of beta-barrel proteins into the outer membrane. This chain is Outer membrane protein assembly factor BamC, found in Photorhabdus asymbiotica subsp. asymbiotica (strain ATCC 43949 / 3105-77) (Xenorhabdus luminescens (strain 2)).